A 375-amino-acid chain; its full sequence is Biotin synthase, mitochondrial (375 aa).

Residues 1–16 (MMSTIYRHLSTARPAL) constitute a mitochondrion transit peptide. Positions 81–310 (HDPTKVQLCT…IATARIVMPK (230 aa)) constitute a Radical SAM core domain. [4Fe-4S] cluster contacts are provided by cysteine 99, cysteine 103, and cysteine 106. [2Fe-2S] cluster contacts are provided by cysteine 143, cysteine 176, cysteine 236, and arginine 314.

The protein belongs to the radical SAM superfamily. Biotin synthase family. Requires [4Fe-4S] cluster as cofactor. It depends on [2Fe-2S] cluster as a cofactor.

Its subcellular location is the mitochondrion. It carries out the reaction (4R,5S)-dethiobiotin + (sulfur carrier)-SH + 2 reduced [2Fe-2S]-[ferredoxin] + 2 S-adenosyl-L-methionine = (sulfur carrier)-H + biotin + 2 5'-deoxyadenosine + 2 L-methionine + 2 oxidized [2Fe-2S]-[ferredoxin]. It functions in the pathway cofactor biosynthesis; biotin biosynthesis; biotin from 7,8-diaminononanoate: step 2/2. This is Biotin synthase, mitochondrial (BIO2) from Saccharomyces cerevisiae (strain ATCC 204508 / S288c) (Baker's yeast).